The sequence spans 247 residues: Coproheme decarboxylase (247 aa).

Fe-coproporphyrin III contacts are provided by residues R129, 143–147 (YPMDK), H170, Q183, and S221. Residue Y143 is part of the active site.

This sequence belongs to the ChdC family. Type 1 subfamily. Fe-coproporphyrin III is required as a cofactor.

The enzyme catalyses Fe-coproporphyrin III + 2 H2O2 + 2 H(+) = heme b + 2 CO2 + 4 H2O. The catalysed reaction is Fe-coproporphyrin III + H2O2 + H(+) = harderoheme III + CO2 + 2 H2O. It carries out the reaction harderoheme III + H2O2 + H(+) = heme b + CO2 + 2 H2O. It functions in the pathway porphyrin-containing compound metabolism; protoheme biosynthesis. Its function is as follows. Involved in coproporphyrin-dependent heme b biosynthesis. Catalyzes the decarboxylation of Fe-coproporphyrin III (coproheme) to heme b (protoheme IX), the last step of the pathway. The reaction occurs in a stepwise manner with a three-propionate intermediate. This chain is Coproheme decarboxylase, found in Bacillus anthracis.